We begin with the raw amino-acid sequence, 634 residues long: Probable potassium transport system protein Kup 2 (634 aa).

Transmembrane regions (helical) follow at residues 15–35 (LTLG…LYAF), 55–75 (VLSL…VIFL), 101–121 (WVAV…DAII), 142–162 (GMSQ…LFMF), 173–193 (LFGP…LWHI), 208–228 (AVTF…AVFL), 252–272 (WLSF…ALAL), 303–323 (LVIL…TGAY), 351–371 (IYMP…VLGF), 381–401 (YGIA…LIAW), 408–428 (PVWT…FFGA), and 435–455 (EGGW…FTWL).

This sequence belongs to the HAK/KUP transporter (TC 2.A.72) family.

It localises to the cell inner membrane. The enzyme catalyses K(+)(in) + H(+)(in) = K(+)(out) + H(+)(out). Transport of potassium into the cell. Likely operates as a K(+):H(+) symporter. The chain is Probable potassium transport system protein Kup 2 from Novosphingobium aromaticivorans (strain ATCC 700278 / DSM 12444 / CCUG 56034 / CIP 105152 / NBRC 16084 / F199).